We begin with the raw amino-acid sequence, 229 residues long: ATP synthase subunit a (229 aa).

6 consecutive transmembrane segments (helical) span residues 25–45, 82–102, 104–124, 142–162, 181–201, and 202–222; these read ADAV…SIAA, FFPL…IGLI, GFFP…VVFV, FLGP…IGHL, LVLI…MMLM, and GVLV…IYIQ.

It belongs to the ATPase A chain family. As to quaternary structure, F-type ATPases have 2 components, CF(1) - the catalytic core - and CF(0) - the membrane proton channel. CF(1) has five subunits: alpha(3), beta(3), gamma(1), delta(1), epsilon(1). CF(0) has three main subunits: a(1), b(2) and c(9-12). The alpha and beta chains form an alternating ring which encloses part of the gamma chain. CF(1) is attached to CF(0) by a central stalk formed by the gamma and epsilon chains, while a peripheral stalk is formed by the delta and b chains.

It localises to the cell inner membrane. Functionally, key component of the proton channel; it plays a direct role in the translocation of protons across the membrane. The sequence is that of ATP synthase subunit a from Geobacter sp. (strain M21).